The chain runs to 329 residues: DNA-directed RNA polymerase subunit alpha (329 aa).

Residues 1–235 form an alpha N-terminal domain (alpha-NTD) region; that stretch reads MQNSIMDFLR…EQLEAFVDLR (235 aa). Positions 249–329 are alpha C-terminal domain (alpha-CTD); it reads FEPILLRPVD…NWPPSSILDE (81 aa).

It belongs to the RNA polymerase alpha chain family. Homodimer. The RNAP catalytic core consists of 2 alpha, 1 beta, 1 beta' and 1 omega subunit. When a sigma factor is associated with the core the holoenzyme is formed, which can initiate transcription.

It catalyses the reaction RNA(n) + a ribonucleoside 5'-triphosphate = RNA(n+1) + diphosphate. Functionally, DNA-dependent RNA polymerase catalyzes the transcription of DNA into RNA using the four ribonucleoside triphosphates as substrates. The polypeptide is DNA-directed RNA polymerase subunit alpha (Buchnera aphidicola subsp. Acyrthosiphon pisum (strain APS) (Acyrthosiphon pisum symbiotic bacterium)).